The sequence spans 152 residues: Superoxide dismutase [Cu-Zn] 2 (152 aa).

Cu cation is bound by residues His-45, His-47, and His-62. Cys-56 and Cys-145 are oxidised to a cystine. The Zn(2+) site is built by His-62, His-70, His-79, and Asp-82. His-119 provides a ligand contact to Cu cation.

This sequence belongs to the Cu-Zn superoxide dismutase family. In terms of assembly, homodimer. Requires Cu cation as cofactor. The cofactor is Zn(2+).

It is found in the cytoplasm. It carries out the reaction 2 superoxide + 2 H(+) = H2O2 + O2. In terms of biological role, destroys radicals which are normally produced within the cells and which are toxic to biological systems. In Oryza sativa subsp. japonica (Rice), this protein is Superoxide dismutase [Cu-Zn] 2 (SODCC2).